The following is an 847-amino-acid chain: DNA mismatch repair protein MutS (847 aa).

Position 602–609 (602–609) interacts with ATP; that stretch reads GPNMSGKS.

Belongs to the DNA mismatch repair MutS family.

This protein is involved in the repair of mismatches in DNA. It is possible that it carries out the mismatch recognition step. This protein has a weak ATPase activity. This Streptococcus uberis (strain ATCC BAA-854 / 0140J) protein is DNA mismatch repair protein MutS.